The primary structure comprises 151 residues: Kinetoplast-associated protein 1 (151 aa).

A propeptide spanning residues Met1–Leu9 is cleaved from the precursor. The tract at residues Ala13–Lys151 is disordered. Low complexity-rich tracts occupy residues Ser15 to Val49, Ala70 to Lys91, and Ser101 to Gly111. The segment covering Lys112–Lys151 has biased composition (basic residues).

This sequence belongs to the KAP family. As to quaternary structure, associates with the kinetoplast DNA network.

The protein resides in the mitochondrion matrix. It is found in the kinetoplast. In terms of biological role, histone H1-like DNA-binding protein involved in the organization and segregation of kinetoplast DNA (kDNA). The mitochondrial DNA of kinetoplastid protozoa consists of about 5,000 minicircles and 20 to 30 maxicircles. These circular DNAs are held together by catenation into a highly organized compact disk structure referred to as a kinetoplast DNA (kDNA) network. Binds preferentially to a specific fragment of minicircle DNA and is able to compact kDNA networks through DNA charge neutralization and condensation. In Crithidia fasciculata, this protein is Kinetoplast-associated protein 1 (KAP4).